We begin with the raw amino-acid sequence, 519 residues long: Chromobox protein homolog 2 (519 aa).

The region spanning 12-70 (FAAECILSKRLRKGKLEYLVKWRGWSSKHNSWEPEENILDPRLLLAFQKKEHEKEVQNR) is the Chromo domain. Over residues 60 to 69 (KKEHEKEVQN) the composition is skewed to basic and acidic residues. The segment at 60-180 (KKEHEKEVQN…PPEQKAARRP (121 aa)) is disordered. Positions 70 to 84 (RKRGKRPRGRPRKHT) are enriched in basic residues. The a.T hook DNA-binding region spans 75 to 87 (RPRGRPRKHTVTS). A compositionally biased stretch (low complexity) spans 103 to 119 (KSKSSSSSSSSTSSSSS). Positions 129 to 141 (LDSKRGPRGRETH) are enriched in basic and acidic residues. Residues Lys147 and Lys154 each participate in a glycyl lysine isopeptide (Lys-Gly) (interchain with G-Cter in SUMO2) cross-link. A Nuclear localization signal motif is present at residues 164–169 (KRGRKP). Position 248 is an asymmetric dimethylarginine; alternate (Arg248). The residue at position 248 (Arg248) is an Omega-N-methylarginine; alternate. Disordered stretches follow at residues 295–336 (QKGG…LAPT) and 367–464 (AIPA…TSLP). Ser303 bears the Phosphoserine mark. Composition is skewed to polar residues over residues 321–336 (QRGNHSGSPGAQLAPT) and 384–395 (TGANMTNAPTDN). Residues 453 to 464 (SSDSDPDSTSLP) are compositionally biased toward low complexity.

As to quaternary structure, component of a PRC1-like complex. The composition of the PRC1 complex may differ between the PRC1 complex in pluripotent embryonic stem cells containing RNF2, CBX7 and PCGF2, and the PRC1 complex in differentiating cells containing RNF2, CBX2, CBX4 and BMI1. Interacts with RING1/RNF2. Interacts (via chromodomain) with histone H3K9Me3 and H3K27me3. May interact with H3C15 and H3C1. Expressed in embryoid bodies.

It is found in the nucleus speckle. Its subcellular location is the chromosome. Component of a Polycomb group (PcG) multiprotein PRC1-like complex, a complex class required to maintain the transcriptionally repressive state of many genes, including Hox genes, throughout development. PcG PRC1 complex acts via chromatin remodeling and modification of histones; it mediates monoubiquitination of histone H2A 'Lys-119', rendering chromatin heritably changed in its expressibility. Binds to histone H3 trimethylated at 'Lys-9' (H3K9me3) or at 'Lys-27' (H3K27me3). Plays a role in the lineage differentiation of the germ layers in embryonic development. Involved in sexual development, acting as activator of NR5A1 expression. The protein is Chromobox protein homolog 2 (Cbx2) of Mus musculus (Mouse).